The sequence spans 568 residues: Urease subunit alpha (568 aa).

In terms of domain architecture, Urease spans 129 to 568; the sequence is GAIDSHIHFI…LPMAQRYFLF (440 aa). The Ni(2+) site is built by His134, His136, and Lys217. Lys217 carries the post-translational modification N6-carboxylysine. A substrate-binding site is contributed by His219. Ni(2+) contacts are provided by His246 and His272. Catalysis depends on His320, which acts as the Proton donor. Position 360 (Asp360) interacts with Ni(2+).

The protein belongs to the metallo-dependent hydrolases superfamily. Urease alpha subunit family. Heterotrimer of UreA (gamma), UreB (beta) and UreC (alpha) subunits. Three heterotrimers associate to form the active enzyme. Ni cation is required as a cofactor. Post-translationally, carboxylation allows a single lysine to coordinate two nickel ions.

It localises to the cytoplasm. The enzyme catalyses urea + 2 H2O + H(+) = hydrogencarbonate + 2 NH4(+). The protein operates within nitrogen metabolism; urea degradation; CO(2) and NH(3) from urea (urease route): step 1/1. This chain is Urease subunit alpha, found in Saccharophagus degradans (strain 2-40 / ATCC 43961 / DSM 17024).